The chain runs to 131 residues: Small ribosomal subunit protein uS8 (131 aa).

The protein belongs to the universal ribosomal protein uS8 family. Part of the 30S ribosomal subunit. Contacts proteins S5 and S12.

One of the primary rRNA binding proteins, it binds directly to 16S rRNA central domain where it helps coordinate assembly of the platform of the 30S subunit. This chain is Small ribosomal subunit protein uS8, found in Dictyoglomus turgidum (strain DSM 6724 / Z-1310).